Reading from the N-terminus, the 2504-residue chain is Fatty acid synthase (2504 aa).

N-acetylmethionine is present on Met1. A Ketosynthase family 3 (KS3) domain is found at 1–406 (MEEVVIAGMS…GSNVHVILQP (406 aa)). Lys59 is subject to N6-acetyllysine. Ser63 is modified (phosphoserine). Lys70 bears the N6-acetyllysine mark. The active-site For beta-ketoacyl synthase activity is the Cys161. The residue at position 207 (Ser207) is a Phosphoserine. His293 (for beta-ketoacyl synthase activity) is an active-site residue. Residue Lys298 is modified to N6-acetyllysine. Residue His331 is the For beta-ketoacyl synthase activity of the active site. Residues 429–817 (RTLEAVQDLL…INVNPNALFP (389 aa)) form an acyl and malonyl transferases region. The residue at position 528 (Lys528) is an N6-acetyllysine. Catalysis depends on Ser581, which acts as the For malonyltransferase activity. Residues 647–648 (DT) and Phe671 contribute to the an acyl-CoA site. Lys673 is modified (N6-acetyllysine). Ser725 carries the post-translational modification Phosphoserine. Residue Arg773 coordinates an acyl-CoA. The residue at position 790 (Lys790) is an N6-acetyllysine. An N-terminal hotdog fold region spans residues 844–967 (VPVAEDFPNG…VYLWEDPNSK (124 aa)). The region spanning 844–1104 (VPVAEDFPNG…ISRLQTTATS (261 aa)) is the PKS/mFAS DH domain. His878 (proton acceptor; for dehydratase activity) is an active-site residue. Positions 982–1104 (SVSRLTQGEV…ISRLQTTATS (123 aa)) are C-terminal hotdog fold. N6-acetyllysine is present on Lys993. Asp1032 functions as the Proton donor; for dehydratase activity in the catalytic mechanism. Lys1071 and Lys1276 each carry N6-acetyllysine. At Cys1464 the chain carries S-nitrosocysteine. Phosphoserine is present on residues Ser1577 and Ser1587. The tract at residues 1628 to 1856 (DVPSSWTLEE…VQVREEEPEA (229 aa)) is enoyl reductase. Residue 1664–1681 (VLIHSGSGGVGQAAISIA) participates in NADP(+) binding. At Lys1697 the chain carries N6-(pyridoxal phosphate)lysine; alternate. Lys1697 carries the N6-acetyllysine; alternate modification. Lys1764 and Lys1840 each carry N6-acetyllysine. A beta-ketoacyl reductase region spans residues 1857 to 2111 (VLPGAQPTLI…FVLAEKKAVA (255 aa)). 1879–1894 (SYIITGGLGGFGLELA) provides a ligand contact to NADP(+). Lys1988 is modified (N6-acetyllysine). Cys2084 is modified (S-nitrosocysteine). One can recognise a Carrier domain in the interval 2112-2192 (HGDGDTQRDL…EMSSKTDSAT (81 aa)). Position 2150 is an O-(pantetheine 4'-phosphoryl)serine; alternate (Ser2150). At Ser2150 the chain carries Phosphoserine; alternate. Positions 2181-2205 (LQEMSSKTDSATDTTAPKSRSDTSL) are disordered. Positions 2185 to 2198 (SSKTDSATDTTAPK) are enriched in low complexity. A phosphoserine mark is found at Ser2190 and Ser2229. The interval 2201 to 2504 (SDTSLKQNQL…AEPRVSVREG (304 aa)) is thioesterase. The For thioesterase activity role is filled by Ser2301. Lys2384 carries the post-translational modification N6-acetyllysine. A Glycyl lysine isopeptide (Lys-Gly) (interchain with G-Cter in SUMO2) cross-link involves residue Lys2442. His2474 acts as the For thioesterase activity in catalysis.

Homodimer which is arranged in a head to tail fashion. Interacts with CEACAM1; this interaction is insulin and phosphorylation-dependent; reduces fatty-acid synthase activity. Post-translationally, S-nitrosylation of Fatty acid synthase at cysteine residues Cys-1464 or Cys-2084 is important for the enzyme dimerization. In adipocytes, S-nitrosylation of Fatty acid synthase occurs under physiological conditions and gradually increases during adipogenesis.

It is found in the cytoplasm. Its subcellular location is the melanosome. It catalyses the reaction acetyl-CoA + n malonyl-CoA + 2n NADPH + 2n H(+) = a long-chain fatty acid + (n+1) CoA + n CO2 + 2n NADP(+).. The catalysed reaction is holo-[ACP] + acetyl-CoA = acetyl-[ACP] + CoA. The enzyme catalyses holo-[ACP] + malonyl-CoA = malonyl-[ACP] + CoA. It carries out the reaction a fatty acyl-[ACP] + malonyl-[ACP] + H(+) = a 3-oxoacyl-[ACP] + holo-[ACP] + CO2. It catalyses the reaction a (3R)-hydroxyacyl-[ACP] + NADP(+) = a 3-oxoacyl-[ACP] + NADPH + H(+). The catalysed reaction is a (3R)-hydroxyacyl-[ACP] = a (2E)-enoyl-[ACP] + H2O. The enzyme catalyses a 2,3-saturated acyl-[ACP] + NADP(+) = a (2E)-enoyl-[ACP] + NADPH + H(+). It carries out the reaction hexadecanoyl-[ACP] + H2O = hexadecanoate + holo-[ACP] + H(+). It catalyses the reaction acetyl-[ACP] + malonyl-[ACP] + H(+) = 3-oxobutanoyl-[ACP] + holo-[ACP] + CO2. The catalysed reaction is 3-oxobutanoyl-[ACP] + NADPH + H(+) = (3R)-hydroxybutanoyl-[ACP] + NADP(+). The enzyme catalyses (3R)-hydroxybutanoyl-[ACP] = (2E)-butenoyl-[ACP] + H2O. It carries out the reaction (2E)-butenoyl-[ACP] + NADPH + H(+) = butanoyl-[ACP] + NADP(+). It catalyses the reaction butanoyl-[ACP] + malonyl-[ACP] + H(+) = 3-oxohexanoyl-[ACP] + holo-[ACP] + CO2. The catalysed reaction is 3-oxohexanoyl-[ACP] + NADPH + H(+) = (3R)-hydroxyhexanoyl-[ACP] + NADP(+). The enzyme catalyses (3R)-hydroxyhexanoyl-[ACP] = (2E)-hexenoyl-[ACP] + H2O. It carries out the reaction (2E)-hexenoyl-[ACP] + NADPH + H(+) = hexanoyl-[ACP] + NADP(+). It catalyses the reaction hexanoyl-[ACP] + malonyl-[ACP] + H(+) = 3-oxooctanoyl-[ACP] + holo-[ACP] + CO2. The catalysed reaction is 3-oxooctanoyl-[ACP] + NADPH + H(+) = (3R)-hydroxyoctanoyl-[ACP] + NADP(+). The enzyme catalyses (3R)-hydroxyoctanoyl-[ACP] = (2E)-octenoyl-[ACP] + H2O. It carries out the reaction (2E)-octenoyl-[ACP] + NADPH + H(+) = octanoyl-[ACP] + NADP(+). It catalyses the reaction octanoyl-[ACP] + malonyl-[ACP] + H(+) = 3-oxodecanoyl-[ACP] + holo-[ACP] + CO2. The catalysed reaction is 3-oxodecanoyl-[ACP] + NADPH + H(+) = (3R)-hydroxydecanoyl-[ACP] + NADP(+). The enzyme catalyses (3R)-hydroxydecanoyl-[ACP] = (2E)-decenoyl-[ACP] + H2O. It carries out the reaction (2E)-decenoyl-[ACP] + NADPH + H(+) = decanoyl-[ACP] + NADP(+). It catalyses the reaction decanoyl-[ACP] + malonyl-[ACP] + H(+) = 3-oxododecanoyl-[ACP] + holo-[ACP] + CO2. The catalysed reaction is 3-oxododecanoyl-[ACP] + NADPH + H(+) = (3R)-hydroxydodecanoyl-[ACP] + NADP(+). The enzyme catalyses (3R)-hydroxydodecanoyl-[ACP] = (2E)-dodecenoyl-[ACP] + H2O. It carries out the reaction (2E)-dodecenoyl-[ACP] + NADPH + H(+) = dodecanoyl-[ACP] + NADP(+). It catalyses the reaction dodecanoyl-[ACP] + malonyl-[ACP] + H(+) = 3-oxotetradecanoyl-[ACP] + holo-[ACP] + CO2. The catalysed reaction is 3-oxotetradecanoyl-[ACP] + NADPH + H(+) = (3R)-hydroxytetradecanoyl-[ACP] + NADP(+). The enzyme catalyses (3R)-hydroxytetradecanoyl-[ACP] = (2E)-tetradecenoyl-[ACP] + H2O. It carries out the reaction (2E)-tetradecenoyl-[ACP] + NADPH + H(+) = tetradecanoyl-[ACP] + NADP(+). It catalyses the reaction tetradecanoyl-[ACP] + malonyl-[ACP] + H(+) = 3-oxohexadecanoyl-[ACP] + holo-[ACP] + CO2. The catalysed reaction is 3-oxohexadecanoyl-[ACP] + NADPH + H(+) = (3R)-hydroxyhexadecanoyl-[ACP] + NADP(+). The enzyme catalyses (3R)-hydroxyhexadecanoyl-[ACP] = (2E)-hexadecenoyl-[ACP] + H2O. It carries out the reaction (2E)-hexadecenoyl-[ACP] + NADPH + H(+) = hexadecanoyl-[ACP] + NADP(+). It catalyses the reaction hexadecanoyl-[ACP] + malonyl-[ACP] + H(+) = 3-oxooctadecanoyl-[ACP] + holo-[ACP] + CO2. The catalysed reaction is 3-oxooctadecanoyl-[ACP] + NADPH + H(+) = (3R)-hydroxyoctadecanoyl-[ACP] + NADP(+). The enzyme catalyses (3R)-hydroxyoctadecanoyl-[ACP] = (2E)-octadecenoyl-[ACP] + H2O. It carries out the reaction (2E)-octadecenoyl-[ACP] + NADPH + H(+) = octadecanoyl-[ACP] + NADP(+). It catalyses the reaction tetradecanoyl-[ACP] + H2O = tetradecanoate + holo-[ACP] + H(+). It functions in the pathway lipid metabolism; fatty acid biosynthesis. In terms of biological role, fatty acid synthetase is a multifunctional enzyme that catalyzes the de novo biosynthesis of long-chain saturated fatty acids starting from acetyl-CoA and malonyl-CoA in the presence of NADPH. This multifunctional protein contains 7 catalytic activities and a site for the binding of the prosthetic group 4'-phosphopantetheine of the acyl carrier protein ([ACP]) domain. The sequence is that of Fatty acid synthase (Fasn) from Mus musculus (Mouse).